Here is an 860-residue protein sequence, read N- to C-terminus: MQEQYRPEDIETQVQLHWQEKQTFKVTEDASKEKYYCLSMLPYPSGRLHMGHVRNYTIGDVISRYQRMLGKNVLQPIGWDAFGLPAEGAAVKNNTAPAPWTYDNIEYMKNQLKLLGFGYDWDREIATCKPDYYRWEQWFFTKLYEKGMVYKKTSAVNWCPHDLTVLANEQVIDGCCWRCDTKVERKEIPQWFIKITDYAEQLLNDLDTLESWPEQVKTMQRNWIGRSEGVDIVFDVVDSEEKLSVYTTRPDTFMGVTYVAVAAGHPLSLQAAATNPALADFVAECRNTKVAEAEMATMEKKGMATGLYAIHPLTGEKLPIWAANFVLMDYGTGAVMAVPGHDARDWEFATKYNLPIKPVILAADGSEPDLSQEAMTEKGTLFNSGEFDGLNHEDGFNAIADKLVALGVGQRKVNYRLRDWGVSRQRYWGAPIPMVTLEDGTVVPTPEDQLPVILPEDVVMDGISSPIKADPEWAKTTVNGIPGLRETDTFDTFMESSWYYARYTCPQYDDGMLDPAAANYWLPVDQYVGGIEHAIMHLMYFRFFHKLLRDAGLVDSDEPAKRLLCQGMVLADAFYYTGNNGERIWVSPVDAIVERDDKGRIVKAVDAEGHELVYAGMSKMSKSKNNGIDPQVMVEKYGADTVRLFMMFASPAEMTLEWQESGVEGANRFLKRVWRLAFDHTAKGAVKPLDIASLTEEQKSLRRDLHKTIAKVTDDVGRRQTFNTAIAAVMELMNKLGRAPQETEQDRALMQEALLAVVRMLYPFTPHVCFSLWQALGGEGDIDTAPWPIADEQAMVEDSKLVVVQVNGKVRGRITVPADATEQQVRERAGQEHLVAKYLDGVTVRKVIYVPGKLLNLVVG.

The 'HIGH' region motif lies at 42-52; it reads PYPSGRLHMGH. Positions 619 to 623 match the 'KMSKS' region motif; sequence KMSKS. Position 622 (Lys-622) interacts with ATP.

This sequence belongs to the class-I aminoacyl-tRNA synthetase family.

It localises to the cytoplasm. The enzyme catalyses tRNA(Leu) + L-leucine + ATP = L-leucyl-tRNA(Leu) + AMP + diphosphate. The sequence is that of Leucine--tRNA ligase from Yersinia pseudotuberculosis serotype I (strain IP32953).